The chain runs to 229 residues: UPF0173 metal-dependent hydrolase RD1_1994 (229 aa).

The protein belongs to the UPF0173 family.

The chain is UPF0173 metal-dependent hydrolase RD1_1994 from Roseobacter denitrificans (strain ATCC 33942 / OCh 114) (Erythrobacter sp. (strain OCh 114)).